The primary structure comprises 277 residues: Protein OPG166 (277 aa).

N-linked (GlcNAc...) asparagine; by host glycosylation is found at Asn29 and Asn58. 5 helical membrane passes run 124–144, 156–176, 186–206, 219–239, and 247–267; these read TMLM…EIAY, GILQ…AFLF, IIGL…KVFS, LIIY…GLSL, and LLLS…LFLV.

It belongs to the orthopoxvirus OPG166 protein family.

The protein resides in the host membrane. Its function is as follows. Promotes, when overexpressed, the influx of extracellular Ca(2+), leading to membrane permeability and host cell necrosis. This is Protein OPG166 (OPG166) from Variola virus (isolate Human/India/Ind3/1967) (VARV).